The following is a 271-amino-acid chain: Phosphatidylglycerol--prolipoprotein diacylglyceryl transferase (271 aa).

7 helical membrane-spanning segments follow: residues 25-45 (WYGI…KFFV), 60-80 (YFIW…ILIY), 103-123 (FVGI…IATL), 134-154 (WIFL…GRIG), 181-201 (PSQL…VYLA), 209-229 (GELI…CEFY), and 235-255 (GIGF…IMFI). Arg152 provides a ligand contact to a 1,2-diacyl-sn-glycero-3-phospho-(1'-sn-glycerol).

It belongs to the Lgt family.

It localises to the cell inner membrane. It catalyses the reaction L-cysteinyl-[prolipoprotein] + a 1,2-diacyl-sn-glycero-3-phospho-(1'-sn-glycerol) = an S-1,2-diacyl-sn-glyceryl-L-cysteinyl-[prolipoprotein] + sn-glycerol 1-phosphate + H(+). It participates in protein modification; lipoprotein biosynthesis (diacylglyceryl transfer). Functionally, catalyzes the transfer of the diacylglyceryl group from phosphatidylglycerol to the sulfhydryl group of the N-terminal cysteine of a prolipoprotein, the first step in the formation of mature lipoproteins. The polypeptide is Phosphatidylglycerol--prolipoprotein diacylglyceryl transferase (Campylobacter jejuni subsp. jejuni serotype O:6 (strain 81116 / NCTC 11828)).